A 372-amino-acid chain; its full sequence is NAD(P)H-quinone oxidoreductase subunit 1 (372 aa).

Transmembrane regions (helical) follow at residues 27–47 (IIWLPLPMLLVLVAAVVGVLV), 97–117 (ILFTAGPILVLVPVILSWLIV), 128–148 (VGIGIFLWIALSSIQPIGLLM), 176–196 (LALSVLAIVLMTNSLSTIDIV), 204–224 (ILSWNIWRQPVGFIVFWICAL), 266–286 (ILSALLVSILYLGGWGFPIPV), 308–328 (SIGIVMTVLKAYLLVFIAILL), and 347–367 (FLLPISLANLLITAGLKLAFP).

It belongs to the complex I subunit 1 family. In terms of assembly, NDH-1 is composed of at least 11 different subunits.

The protein localises to the cellular thylakoid membrane. It carries out the reaction a plastoquinone + NADH + (n+1) H(+)(in) = a plastoquinol + NAD(+) + n H(+)(out). The enzyme catalyses a plastoquinone + NADPH + (n+1) H(+)(in) = a plastoquinol + NADP(+) + n H(+)(out). Functionally, NDH-1 shuttles electrons from an unknown electron donor, via FMN and iron-sulfur (Fe-S) centers, to quinones in the respiratory and/or the photosynthetic chain. The immediate electron acceptor for the enzyme in this species is believed to be plastoquinone. Couples the redox reaction to proton translocation, and thus conserves the redox energy in a proton gradient. This is NAD(P)H-quinone oxidoreductase subunit 1 from Prochlorococcus marinus (strain MIT 9215).